Reading from the N-terminus, the 1093-residue chain is Isoleucine--tRNA ligase, chloroplastic/mitochondrial (1093 aa).

The disordered stretch occupies residues Pro-69–Lys-103. Residues Lys-90–Lys-103 show a composition bias toward basic and acidic residues. Positions Pro-155–His-165 match the 'HIGH' region motif. An L-isoleucyl-5'-AMP-binding site is contributed by Glu-682. A 'KMSKS' region motif is present at residues Lys-723 to Ser-727. Lys-726 is a binding site for ATP. 4 residues coordinate Zn(2+): Cys-1050, Cys-1053, Cys-1070, and Cys-1073.

This sequence belongs to the class-I aminoacyl-tRNA synthetase family.

It is found in the plastid. The protein localises to the chloroplast. It localises to the mitochondrion. It catalyses the reaction tRNA(Ile) + L-isoleucine + ATP = L-isoleucyl-tRNA(Ile) + AMP + diphosphate. The protein is Isoleucine--tRNA ligase, chloroplastic/mitochondrial of Arabidopsis thaliana (Mouse-ear cress).